Here is a 185-residue protein sequence, read N- to C-terminus: Threonylcarbamoyl-AMP synthase (185 aa).

A YrdC-like domain is found at 1–185 (MDNFEQVLNA…AKTSQILRQG (185 aa)). The disordered stretch occupies residues 163–185 (ETSGRDKPSEIRDAKTSQILRQG). The span at 164–177 (TSGRDKPSEIRDAK) shows a compositional bias: basic and acidic residues.

This sequence belongs to the SUA5 family. TsaC subfamily.

Its subcellular location is the cytoplasm. The enzyme catalyses L-threonine + hydrogencarbonate + ATP = L-threonylcarbamoyladenylate + diphosphate + H2O. Its function is as follows. Required for the formation of a threonylcarbamoyl group on adenosine at position 37 (t(6)A37) in tRNAs that read codons beginning with adenine. Catalyzes the conversion of L-threonine, HCO(3)(-)/CO(2) and ATP to give threonylcarbamoyl-AMP (TC-AMP) as the acyladenylate intermediate, with the release of diphosphate. The chain is Threonylcarbamoyl-AMP synthase from Vibrio parahaemolyticus serotype O3:K6 (strain RIMD 2210633).